Here is a 499-residue protein sequence, read N- to C-terminus: Probable lipid II flippase MurJ (499 aa).

Transmembrane regions (helical) follow at residues 4–24 (LFRASLLFSLGILLSRIFGYV), 26–46 (DATVAYYFGASAVSDAFFIAF), 88–108 (LLITFSLSVVIIGLLFPEEII), 130–150 (FTILYLPLVSFYAYSMAILLV), 154–174 (FFVPSVSQTLFNLGFILSLVI), 184–204 (LALAVLIGGLFQIIPNTFLLF), 227–247 (FLFTLGGFSANQLSLFVDTFL), 265–285 (IYLLPISLFSISLSNTLLALV), 297–317 (TALKLTLMLSIPSSFGLFFLS), 335–355 (LFYTSGLLSLYAFSVPFYSLQ), 375–395 (AFLSVFLEALFGSVFIFLLNF), 396–416 (GVYSFPLAALISSSSVLVYLY), 425–445 (IPFGNLIKYLIASSFMGGLVY), and 455–475 (FILVSFIPIYALFYYVFLIIL).

It belongs to the MurJ/MviN family.

It localises to the cell inner membrane. It functions in the pathway cell wall biogenesis; peptidoglycan biosynthesis. Functionally, involved in peptidoglycan biosynthesis. Transports lipid-linked peptidoglycan precursors from the inner to the outer leaflet of the cytoplasmic membrane. This chain is Probable lipid II flippase MurJ, found in Aquifex aeolicus (strain VF5).